Here is a 184-residue protein sequence, read N- to C-terminus: Myosin regulatory light chain 1 (184 aa).

The disordered stretch occupies residues methionine 1–glutamine 29. Position 36 is a phosphoserine (serine 36). EF-hand domains are found at residues serine 45 to aspartate 80 and serine 114 to arginine 149. Ca(2+)-binding residues include aspartate 58, aspartate 60, aspartate 62, asparagine 64, and aspartate 69.

In terms of assembly, binds to myosin II chains myo2 and myo3.

It localises to the cytoplasm. The protein is Myosin regulatory light chain 1 (rlc1) of Schizosaccharomyces pombe (strain 972 / ATCC 24843) (Fission yeast).